The chain runs to 117 residues: UPF0342 protein lmo2223 (117 aa).

It belongs to the UPF0342 family.

The sequence is that of UPF0342 protein lmo2223 from Listeria monocytogenes serovar 1/2a (strain ATCC BAA-679 / EGD-e).